Reading from the N-terminus, the 107-residue chain is Probable 4-amino-4-deoxy-L-arabinose-phosphoundecaprenol flippase subunit ArnE (107 aa).

Residues 31 to 105 (RVWGWLALSL…IIVGIILLGG (75 aa)) enclose the EamA domain. 3 consecutive transmembrane segments (helical) span residues 34–54 (GWLALSLVLLGCAMLLWLFVL), 57–77 (VPVSVAYPMLSLNFIFITLAA), and 85–105 (IALRHGVGVLLIIVGIILLGG).

The protein belongs to the ArnE family. Heterodimer of ArnE and ArnF.

The protein localises to the cell inner membrane. It functions in the pathway bacterial outer membrane biogenesis; lipopolysaccharide biosynthesis. Functionally, translocates 4-amino-4-deoxy-L-arabinose-phosphoundecaprenol (alpha-L-Ara4N-phosphoundecaprenol) from the cytoplasmic to the periplasmic side of the inner membrane. In Enterobacter sp. (strain 638), this protein is Probable 4-amino-4-deoxy-L-arabinose-phosphoundecaprenol flippase subunit ArnE.